A 161-amino-acid chain; its full sequence is MKAGEPGLALAVQYAVAEPRLPRWRLRRWAGYALAGAAADGLIDFQAAELNVRLVGQAEGRRLNADFRGRDYATNVLTFEYGVDPLGTARGDIVICAPVLAREAREQKKSFVDHATHLTIHGVLHALGYDHIKVREAKRMEALETRILARMGIADPYLLAD.

The Zn(2+) site is built by histidine 121, histidine 125, and histidine 131.

The protein belongs to the endoribonuclease YbeY family. Zn(2+) serves as cofactor.

It localises to the cytoplasm. Single strand-specific metallo-endoribonuclease involved in late-stage 70S ribosome quality control and in maturation of the 3' terminus of the 16S rRNA. In Bordetella avium (strain 197N), this protein is Endoribonuclease YbeY.